The chain runs to 245 residues: uncharacterized protein (245 aa).

4 helical membrane passes run Phe-10–Tyr-30, Thr-94–Ile-114, Val-134–Ile-154, and Arg-196–Trp-216.

It is found in the membrane. This is an uncharacterized protein from Dictyostelium discoideum (Social amoeba).